Consider the following 200-residue polypeptide: Recombination protein RecR (200 aa).

Residues 58-73 (CSVCGNLTDTDPCFIC) form a C4-type zinc finger. The 96-residue stretch at 81–176 (DLLCVVERPR…SVTRIAHGLP (96 aa)) folds into the Toprim domain.

It belongs to the RecR family.

May play a role in DNA repair. It seems to be involved in an RecBC-independent recombinational process of DNA repair. It may act with RecF and RecO. The sequence is that of Recombination protein RecR from Pelotomaculum thermopropionicum (strain DSM 13744 / JCM 10971 / SI).